The chain runs to 525 residues: Ankyrin repeat and SOCS box protein 3 (525 aa).

ANK repeat units lie at residues 9–38 (DTCS…SIDV), 42–71 (RGWM…SENY), 78–107 (EGFC…DPNA), 111–140 (EETT…NVNG), 145–174 (CGWN…NKEC), 178–207 (FGIT…DVNC), 211–240 (DKAT…DPDL), 246–275 (NWQL…RVCD), 279–308 (NKVS…SPDA), 315–346 (GFSS…QLNE), and 348–373 (HLAY…PSTP). One can recognise an SOCS box domain in the interval 441–505 (MLSARASNSS…HDYLLYAEVL (65 aa)).

Belongs to the ankyrin SOCS box (ASB) family. Interacts with ELOB and TNFRSF1B.

It functions in the pathway protein modification; protein ubiquitination. Its function is as follows. Probable substrate-recognition component of a SCF-like ECS (Elongin-Cullin-SOCS-box protein) E3 ubiquitin-protein ligase complex which mediates the ubiquitination and subsequent proteasomal degradation of target proteins. Recognizes TNFRSF1B. In Bos taurus (Bovine), this protein is Ankyrin repeat and SOCS box protein 3 (ASB3).